The following is a 130-amino-acid chain: Glycine cleavage system H protein (130 aa).

Positions 28–110 (TVRIGITSVA…FGEGWLFEVE (83 aa)) constitute a Lipoyl-binding domain. Lys69 is subject to N6-lipoyllysine.

It belongs to the GcvH family. As to quaternary structure, the glycine cleavage system is composed of four proteins: P, T, L and H. Requires (R)-lipoate as cofactor.

Functionally, the glycine cleavage system catalyzes the degradation of glycine. The H protein shuttles the methylamine group of glycine from the P protein to the T protein. This is Glycine cleavage system H protein from Corynebacterium aurimucosum (strain ATCC 700975 / DSM 44827 / CIP 107346 / CN-1) (Corynebacterium nigricans).